Reading from the N-terminus, the 196-residue chain is uncharacterized protein (196 aa).

Residues 21–35 (ESRRKDGSVRRERAV) are compositionally biased toward basic and acidic residues. Disordered stretches follow at residues 21-53 (ESRRKDGSVRRERAVKPGYTAPEDIKRYRPGRG) and 65-196 (LQLS…KEKE). Residues 66–75 (QLSNDASTSK) show a composition bias toward polar residues. 3 stretches are compositionally biased toward basic and acidic residues: residues 84 to 94 (ELEKEKLERPL), 100 to 143 (EKND…KDFK), and 173 to 196 (KMSKRENKKSINTVDKKTGYKEKE).

This is an uncharacterized protein from Schizosaccharomyces pombe (strain 972 / ATCC 24843) (Fission yeast).